The following is a 411-amino-acid chain: SH3 and cysteine-rich domain-containing protein 2 (411 aa).

A disordered region spans residues Met-1–Thr-29. Residues Pro-19 to Thr-29 show a composition bias toward polar residues. Ser-48 bears the Phosphoserine mark. The segment at Thr-64 to Pro-95 is disordered. Positions Pro-70–Thr-82 are enriched in pro residues. The Phorbol-ester/DAG-type zinc finger occupies Leu-110–Cys-161. Disordered regions lie at residues Ser-174–Pro-203 and Arg-219–Arg-288. Over residues Arg-219–Ser-232 the composition is skewed to low complexity. 2 SH3 domains span residues Gly-292 to Pro-351 and Asn-354 to Ile-411.

Interacts (via SH3 domains) with CACNA1S. Interacts (via SH3 domains) with CACNA1C. Has much lower affinity for CACNA1C than for CACNA1S.

Its subcellular location is the cytoplasm. The protein resides in the cytosol. It is found in the cell membrane. It localises to the sarcolemma. In terms of biological role, plays a redundant role in promoting the expression of calcium channel CACNA1S at the cell membrane, and thereby contributes to increased channel activity. Slows down the inactivation rate of the calcium channel CACNA1C. In Homo sapiens (Human), this protein is SH3 and cysteine-rich domain-containing protein 2 (STAC2).